The primary structure comprises 260 residues: Transmembrane protein 70, mitochondrial (260 aa).

The transit peptide at 1–81 (MLFLALGSPW…PVYWEGYVRF (81 aa)) directs the protein to the mitochondrion. Topologically, residues 82–102 (LNTPSDKSEDGRLIYTGNMAR) are mitochondrial matrix. Residues 103–123 (AVFGVKCFSYSTSLIGLTFLP) form a helical membrane-spanning segment. The Mitochondrial intermembrane segment spans residues 124 to 141 (YIFTQNNAISESVPLPIQ). Residues 142-162 (IIFYGIMGSFTVITPVLLHFI) traverse the membrane as a helical segment. At 163 to 260 (TKGYVIRLYH…SEEKRHKDDK (98 aa)) the chain is on the mitochondrial matrix side.

Belongs to the TMEM70 family. Homooligomer. Interacts (homooligomer form) with ATP5MC1; this interaction facilitates the oligomer formation of subunit c/ATP5MC1 (c-ring) and the c-ring membrane insertion and also protects ATP5MC1 against intramitochondrial proteolysis. Interacts with the core subunits TMEM126B, NDUFAF1, ECSIT and ACAD9 of the MCIA complex. Interacts with ATP5MC3, TMEM242 and TIMMDC1. As to expression, lower expressed in the heart than in the liver (at protein level).

Its subcellular location is the mitochondrion inner membrane. Scaffold protein that participates in the c-ring assembly of mitochondrial ATP synthase (F(1)F(0) ATP synthase or complex V) by facilitating the membrane insertion and oligomer formation of the subunit c/ATP5MC1 through its interaction. Therefore, participates in the early stage of mitochondrial ATP synthase biogenesis and also protects subunit c/ATP5MC1 against intramitochondrial proteolysis. In addition, binds the mitochondrial proton-transporting ATP synthase complexes I and may play a role in the stability of its membrane-bound subassemblies. This Homo sapiens (Human) protein is Transmembrane protein 70, mitochondrial.